The primary structure comprises 261 residues: Ribonuclease HII (261 aa).

The RNase H type-2 domain maps to 71–259 (KYIAGVDEVG…VKESKLHFDS (189 aa)). The a divalent metal cation site is built by aspartate 77, glutamate 78, and aspartate 169.

The protein belongs to the RNase HII family. Requires Mn(2+) as cofactor. Mg(2+) is required as a cofactor.

It is found in the cytoplasm. The catalysed reaction is Endonucleolytic cleavage to 5'-phosphomonoester.. Functionally, endonuclease that specifically degrades the RNA of RNA-DNA hybrids. The protein is Ribonuclease HII of Listeria monocytogenes serovar 1/2a (strain ATCC BAA-679 / EGD-e).